A 328-amino-acid polypeptide reads, in one-letter code: GMP reductase (328 aa).

Cysteine 176 acts as the Thioimidate intermediate in catalysis. NADP(+) is bound at residue 205-228 (IIADGGIRTHGDIAKSIRFGASMI).

The protein belongs to the IMPDH/GMPR family. GuaC type 2 subfamily.

The catalysed reaction is IMP + NH4(+) + NADP(+) = GMP + NADPH + 2 H(+). Its function is as follows. Catalyzes the irreversible NADPH-dependent deamination of GMP to IMP. It functions in the conversion of nucleobase, nucleoside and nucleotide derivatives of G to A nucleotides, and in maintaining the intracellular balance of A and G nucleotides. This is GMP reductase from Streptococcus pneumoniae (strain P1031).